The following is a 138-amino-acid chain: Putative pre-16S rRNA nuclease (138 aa).

It belongs to the YqgF nuclease family.

The protein resides in the cytoplasm. In terms of biological role, could be a nuclease involved in processing of the 5'-end of pre-16S rRNA. This Enterobacter sp. (strain 638) protein is Putative pre-16S rRNA nuclease.